The sequence spans 228 residues: Hematopoietically-expressed homeobox protein hhex (228 aa).

Positions 117–176 form a DNA-binding region, homeobox; the sequence is RKGGQVRFSNDQTIELEKKFETQKYLSPPERKRLAKMLQLSERQVKTWFQNRRAKWRRLK. The segment at 175 to 228 is disordered; it reads LKQENPPSTGKREAEDSDTRRLSDAAARARELESGASTDSEELLDIEDEHQFTL. Basic and acidic residues predominate over residues 184–207; the sequence is GKREAEDSDTRRLSDAAARARELE. A compositionally biased stretch (acidic residues) spans 213–222; sequence DSEELLDIED.

In terms of tissue distribution, expressed in embryonic endothelial and blood lineages. From late-blastula stage, expression is restricted to the dorsal marginal region of the extraembryonic yolk syncytial layer (YSL). By the onset of gastrulation, expressed in the entire dorsal half of the YSL. Post-gastrulation, expression appears in both anterior and posterior lateral plate mesoderm by the 3-somite stage. Posteriorly, expression is in the intermediate cell mass (ICM), which contains both endothelial and blood precursors. Subsequently expressed in the developing endothelial cells including the endocardium until the onset of circulation (24 hpf) and disappears completely by 30 hpf, at which point expression is seen in the thyroid and liver primordia. Also expressed in the developing biliary tree and pancreas.

The protein resides in the nucleus. Its function is as follows. Recognizes the DNA sequence 5'-ATTAA-3'. Transcriptional repressor. Regulates the differentiation of both endothelial and blood cells. Plays a role in embryonic dorsoventral patterning by regulating bmp expression. May establish anterior identity. Functions in the embryo to regulate liver development. Functions extraembryonically to generate organ chirality. This Danio rerio (Zebrafish) protein is Hematopoietically-expressed homeobox protein hhex.